We begin with the raw amino-acid sequence, 448 residues long: MREVISIHVGQAGVQIGNACWELYCLEHGIQPDGTMPTQSTNEGESFTTFFSDTGSGRYVPRSIFVDLEPTVVDEIRTGTYKKLFHPEQMITGKEDAANNYARGHYTVGKELIDTVLDRIRRLADNCSGLQGFFVFHSFGGGTGSGFTSLLMERLSVDYGKKSKLEFSIYPAPQVSTAVVEPYNSILTTHTTLEHSDCAFMVDNEAIYDICRRNLDVERPSYTNLNRIISQVVSSITASLRFDGALNVDLNEFQTNLVPYPRIHFPLAAYTPLISAEKAYHEALSVSDITNSCFEPANQMVKCDPRHGKYMAVCLLYRGDVVPKDVNTAIAAIKTKRTIQFVDWCPTGFKVGINYQPPTVVPGGDLAKVPRAVCMLSNTTAIAEAWSRLDYKFDLMYAKRAFVHWYVGEGMEEGEFTEAREDLAALEKDYEEVGADSNEGGEEEGEEY.

Residues glutamine 11, glutamate 69, serine 138, glycine 142, threonine 143, threonine 177, asparagine 204, and asparagine 226 each contribute to the GTP site. Residue glutamate 69 participates in Mg(2+) binding. Glutamate 252 is a catalytic residue. Positions 428 to 448 (KDYEEVGADSNEGGEEEGEEY) are disordered. A compositionally biased stretch (acidic residues) spans 429–448 (DYEEVGADSNEGGEEEGEEY).

Belongs to the tubulin family. In terms of assembly, dimer of alpha and beta chains. A typical microtubule is a hollow water-filled tube with an outer diameter of 25 nm and an inner diameter of 15 nM. Alpha-beta heterodimers associate head-to-tail to form protofilaments running lengthwise along the microtubule wall with the beta-tubulin subunit facing the microtubule plus end conferring a structural polarity. Microtubules usually have 13 protofilaments but different protofilament numbers can be found in some organisms and specialized cells. Requires Mg(2+) as cofactor. Undergoes a tyrosination/detyrosination cycle, the cyclic removal and re-addition of a C-terminal tyrosine residue. In terms of tissue distribution, expressed in intestine, pharyngeal muscle cells, and a subset of neurons.

Its subcellular location is the cytoplasm. The protein resides in the cytoskeleton. It carries out the reaction GTP + H2O = GDP + phosphate + H(+). Tubulin is the major constituent of microtubules, a cylinder consisting of laterally associated linear protofilaments composed of alpha- and beta-tubulin heterodimers. Microtubules grow by the addition of GTP-tubulin dimers to the microtubule end, where a stabilizing cap forms. Below the cap, tubulin dimers are in GDP-bound state, owing to GTPase activity of alpha-tubulin. Required for the normal dynamic behavior of the non-centrosomal microtubules in the epidermal syncytium. Involved in the redistribution of microtubule end-binding protein EB1/ebp-2 caused by wounding. Required to modulate expression in the epidermis of antimicrobial peptides, such as nlp-29, after wounding, or fungal infection. This chain is Tubulin alpha-2 chain (tba-2), found in Caenorhabditis elegans.